A 761-amino-acid chain; its full sequence is Elongation factor G, mitochondrial (761 aa).

The transit peptide at 1-42 (MSVQKMMRVPRKMVGGRIPFFTCSKVFSGFSRRSFHESPLAR) directs the protein to the mitochondrion. One can recognise a tr-type G domain in the interval 68 to 349 (NKLRNIGISA…AIVDYLPNPS (282 aa)). Residues 77 to 84 (AHIDSGKT), 148 to 152 (DTPGH), and 202 to 205 (NKMD) contribute to the GTP site.

This sequence belongs to the TRAFAC class translation factor GTPase superfamily. Classic translation factor GTPase family. EF-G/EF-2 subfamily. Post-translationally, the precursor is processed in two steps involving mitochondrial intermediate peptidase (MIP) and mitochondrial processing peptidase (MPP).

It is found in the mitochondrion. The protein operates within protein biosynthesis; polypeptide chain elongation. Functionally, mitochondrial GTPase that catalyzes the GTP-dependent ribosomal translocation step during translation elongation. During this step, the ribosome changes from the pre-translocational (PRE) to the post-translocational (POST) state as the newly formed A-site-bound peptidyl-tRNA and P-site-bound deacylated tRNA move to the P and E sites, respectively. Catalyzes the coordinated movement of the two tRNA molecules, the mRNA and conformational changes in the ribosome. The polypeptide is Elongation factor G, mitochondrial (Saccharomyces cerevisiae (strain YJM789) (Baker's yeast)).